The chain runs to 307 residues: 1-phosphofructokinase (307 aa).

ATP-binding positions include 217 to 222 and 249 to 250; these read SMGSDG and GD. The Proton acceptor role is filled by Asp-250.

It belongs to the carbohydrate kinase PfkB family.

It catalyses the reaction beta-D-fructose 1-phosphate + ATP = beta-D-fructose 1,6-bisphosphate + ADP + H(+). Its function is as follows. Catalyzes the ATP-dependent phosphorylation of fructose-l-phosphate to fructose-l,6-bisphosphate. The chain is 1-phosphofructokinase (fruK) from Borreliella burgdorferi (strain ATCC 35210 / DSM 4680 / CIP 102532 / B31) (Borrelia burgdorferi).